The primary structure comprises 88 residues: Large ribosomal subunit protein bL27 (88 aa).

Residues 1-24 (MATKKSGGSSGNGRDSRGRRLGVK) form a disordered region.

It belongs to the bacterial ribosomal protein bL27 family.

This chain is Large ribosomal subunit protein bL27, found in Ehrlichia canis (strain Jake).